The sequence spans 564 residues: Urocanate hydratase (564 aa).

Residues G54–G55, Q132, G178–G180, E198, R203, N244–A245, Q269–H273, Y279–L280, and Y328 contribute to the NAD(+) site. The active site involves C416. Residue G498 coordinates NAD(+).

The protein belongs to the urocanase family. As to quaternary structure, homodimer. NAD(+) is required as a cofactor.

It catalyses the reaction 4-imidazolone-5-propanoate = trans-urocanate + H2O. The protein operates within amino-acid degradation; L-histidine degradation into L-glutamate; N-formimidoyl-L-glutamate from L-histidine: step 2/3. This Trifolium repens (Creeping white clover) protein is Urocanate hydratase.